A 143-amino-acid chain; its full sequence is Large ribosomal subunit protein uL15 (143 aa).

Positions 1–54 are disordered; that stretch reads MELNSIKPADGAKHAARRVGRGIGSGLGKTAGRGHKGQKSRSGGYHKVGFEGGQ. Positions 21–31 are enriched in gly residues; sequence RGIGSGLGKTA.

This sequence belongs to the universal ribosomal protein uL15 family. In terms of assembly, part of the 50S ribosomal subunit.

Functionally, binds to the 23S rRNA. This is Large ribosomal subunit protein uL15 from Acidovorax ebreus (strain TPSY) (Diaphorobacter sp. (strain TPSY)).